Consider the following 99-residue polypeptide: uncharacterized protein (99 aa).

This is an uncharacterized protein from Borreliella burgdorferi (strain ATCC 35210 / DSM 4680 / CIP 102532 / B31) (Borrelia burgdorferi).